A 56-amino-acid chain; its full sequence is Ribosome biogenesis protein Nop10 (56 aa).

This sequence belongs to the NOP10 family.

Involved in ribosome biogenesis; more specifically in 18S rRNA pseudouridylation and in cleavage of pre-rRNA. This Methanococcoides burtonii (strain DSM 6242 / NBRC 107633 / OCM 468 / ACE-M) protein is Ribosome biogenesis protein Nop10.